Here is a 782-residue protein sequence, read N- to C-terminus: E3 UFM1-protein ligase 1 homolog (782 aa).

The interval 405–478 (VSTQELEDDG…TRGGGGASKK (74 aa)) is disordered.

The protein belongs to the UFL1 family.

In terms of biological role, E3 UFM1-protein ligase that mediates ufmylation of target proteins. The chain is E3 UFM1-protein ligase 1 homolog from Drosophila sechellia (Fruit fly).